A 412-amino-acid chain; its full sequence is Probable inactive allantoicase (412 aa).

The protein belongs to the allantoicase family.

The function of this enzyme is unclear as allantoicase activity is not known to exist in mammals. This chain is Probable inactive allantoicase (ALLC), found in Bos taurus (Bovine).